The primary structure comprises 218 residues: Claudin-5 (218 aa).

Over Met-1–Glu-7 the chain is Cytoplasmic. A helical transmembrane segment spans residues Ile-8–Pro-28. Residues Met-29–Arg-81 are Extracellular-facing. The chain crosses the membrane as a helical span at residues Ala-82 to Ala-102. Over Gln-103–Gly-122 the chain is Cytoplasmic. The helical transmembrane segment at Val-123 to Val-143 threads the bilayer. Residues Val-144–Glu-159 lie on the Extracellular side of the membrane. The helical transmembrane segment at Leu-160–Leu-180 threads the bilayer. Over Leu-181–Val-218 the chain is Cytoplasmic. The tract at residues Tyr-217–Val-218 is interactions with TJP1, TJP2 and TJP3.

The protein belongs to the claudin family. Directly interacts with TJP1/ZO-1, TJP2/ZO-2 and TJP3/ZO-3. Interacts with MPDZ.

The protein resides in the cell junction. It localises to the tight junction. Its subcellular location is the cell membrane. In terms of biological role, plays a major role in tight junction-specific obliteration of the intercellular space. The polypeptide is Claudin-5 (CLDN5) (Homo sapiens (Human)).